The following is an 844-amino-acid chain: Aminopeptidase N (844 aa).

Substrate-binding positions include Glu-120 and 253 to 257; that span reads GAMEN. His-289 serves as a coordination point for Zn(2+). Glu-290 functions as the Proton acceptor in the catalytic mechanism. His-293 and Glu-312 together coordinate Zn(2+).

This sequence belongs to the peptidase M1 family. In terms of assembly, monomer. It depends on Zn(2+) as a cofactor.

The protein localises to the cytoplasm. It carries out the reaction Release of an N-terminal amino acid, Xaa-|-Yaa- from a peptide, amide or arylamide. Xaa is preferably Ala, but may be most amino acids including Pro (slow action). When a terminal hydrophobic residue is followed by a prolyl residue, the two may be released as an intact Xaa-Pro dipeptide.. In terms of biological role, aminopeptidase N is involved in the degradation of intracellular peptides generated by protein breakdown during normal growth as well as in response to nutrient starvation. This Lactobacillus helveticus (Lactobacillus suntoryeus) protein is Aminopeptidase N (pepN).